Here is a 203-residue protein sequence, read N- to C-terminus: ATP-dependent Clp protease proteolytic subunit (203 aa).

The active-site Nucleophile is the Ser100. The active site involves His125.

Belongs to the peptidase S14 family. As to quaternary structure, component of the chloroplastic Clp protease core complex.

Its subcellular location is the plastid. It is found in the chloroplast stroma. The enzyme catalyses Hydrolysis of proteins to small peptides in the presence of ATP and magnesium. alpha-casein is the usual test substrate. In the absence of ATP, only oligopeptides shorter than five residues are hydrolyzed (such as succinyl-Leu-Tyr-|-NHMec, and Leu-Tyr-Leu-|-Tyr-Trp, in which cleavage of the -Tyr-|-Leu- and -Tyr-|-Trp bonds also occurs).. In terms of biological role, cleaves peptides in various proteins in a process that requires ATP hydrolysis. Has a chymotrypsin-like activity. Plays a major role in the degradation of misfolded proteins. The chain is ATP-dependent Clp protease proteolytic subunit from Dioscorea elephantipes (Elephant's foot yam).